A 406-amino-acid polypeptide reads, in one-letter code: Uronyl 2-sulfotransferase (406 aa).

The Cytoplasmic portion of the chain corresponds to 1–49 (MKKKQQHPGGGADPWPHGAPMGGAPPGLGSWKRRVPLLPFLRFSLRDYG). A helical; Signal-anchor for type II membrane protein transmembrane segment spans residues 50-70 (FCMATLLVFCLGSLLYQLSGG). Over 71 to 406 (PPRFLLDLRQ…EKWLEDIYKR (336 aa)) the chain is Lumenal. Residues Asn84, Asn140, and Asn155 are each glycosylated (N-linked (GlcNAc...) asparagine). His168 is a catalytic residue. Asn173 and Asn319 each carry an N-linked (GlcNAc...) asparagine glycan. Residues 387-399 (EPIDDEEQDDEKW) show a composition bias toward acidic residues. The tract at residues 387–406 (EPIDDEEQDDEKWLEDIYKR) is disordered.

The protein belongs to the sulfotransferase 3 family. As to expression, widely expressed.

It localises to the golgi apparatus membrane. Functionally, sulfotransferase that catalyzes the transfer of sulfate to the position 2 of uronyl residues in glycosaminoglycan chains. Has mainly activity toward iduronyl residues in dermatan sulfate, and weaker activity toward glucuronyl residues of chondroitin sulfate. Has little to no activity toward desulfated N-resulfated heparin or N-sulfoheparosan. This Homo sapiens (Human) protein is Uronyl 2-sulfotransferase.